Here is a 337-residue protein sequence, read N- to C-terminus: Annexin E1 (337 aa).

Annexin repeat units lie at residues 10-80 (TGVT…MLYK), 81-154 (PRAQ…AVAT), 161-238 (DTHE…LAHD), and 242-312 (DPCC…LLWE).

It belongs to the annexin family.

It localises to the cell projection. The protein localises to the cilium. Its subcellular location is the flagellum. May function as a calcium-regulated structural element linking phospholipid bilayer and underlying axoneme. This chain is Annexin E1 (ANXE1), found in Giardia intestinalis (Giardia lamblia).